Reading from the N-terminus, the 141-residue chain is uncharacterized protein (141 aa).

Residues 114-134 (ILFTCYIQSFSLLISNFFIAI) form a helical membrane-spanning segment.

Its subcellular location is the membrane. This is an uncharacterized protein from Schizosaccharomyces pombe (strain 972 / ATCC 24843) (Fission yeast).